The following is a 170-amino-acid chain: MANRNDSKNRRNKDDIEDQLVAINRITKVVKGGRRQRFAALVVVGDKKGHVGFGTGKATEVPEAIRKAVEAGKKNMISVPTVGTTIPHEVLGHYGSGNVLLKPAEAGSGIAAGGAVRIVMDMAGIGDVTSKSLGSNTPINVIRATIDGLQKLKTREDVLKLRESAKSLQD.

An S5 DRBM domain is found at 16-79 (IEDQLVAINR…EAGKKNMISV (64 aa)).

This sequence belongs to the universal ribosomal protein uS5 family. As to quaternary structure, part of the 30S ribosomal subunit. Contacts proteins S4 and S8.

Functionally, with S4 and S12 plays an important role in translational accuracy. Located at the back of the 30S subunit body where it stabilizes the conformation of the head with respect to the body. This chain is Small ribosomal subunit protein uS5, found in Lactobacillus delbrueckii subsp. bulgaricus (strain ATCC 11842 / DSM 20081 / BCRC 10696 / JCM 1002 / NBRC 13953 / NCIMB 11778 / NCTC 12712 / WDCM 00102 / Lb 14).